A 556-amino-acid chain; its full sequence is Copine-7 (556 aa).

C2 domains follow at residues 1 to 128 (MSGD…TRPL) and 135 to 262 (NAGK…AQWD). Asp168, Asp174, Asp230, Asp232, and Asp238 together coordinate Ca(2+). A VWFA domain is found at 305–504 (HCTVAIDFTA…PALRDIVQFV (200 aa)). The tract at residues 536–556 (KDLPPRSLGGQTGEAGPSSAP) is disordered.

Belongs to the copine family. Ca(2+) is required as a cofactor.

Its subcellular location is the cytoplasm. It localises to the nucleus. It is found in the cell membrane. Functionally, calcium-dependent phospholipid-binding protein that may play a role in calcium-mediated intracellular processes. The protein is Copine-7 of Rattus norvegicus (Rat).